Reading from the N-terminus, the 277-residue chain is MIIELAKNYGFCFGVKRAIKKAEQIKDAATIGPLIHNNEEISRLQKNFNVKTLENIQALSNEKKAIIRTHGITKQDLEELRKKDIEIFDATCPFVTKPQQICEQMSKEGYEVVIFGDENHPEVKGVKSYVSTKAYVVLDKKELQNIKLPNKIAVVSQTTKKPEHFMEIVNFLILKTKEVRVFNTICDATFKNQDAIKELSLKSDVMVVVGGKNSANTKQLFLIAKTNCEDSYLIETEEELKKEWFLDKKHCGISAGASTPDWIIQKVIAKIENFKIN.

Cys12 contributes to the [4Fe-4S] cluster binding site. Residues His36 and His70 each contribute to the (2E)-4-hydroxy-3-methylbut-2-enyl diphosphate site. Positions 36 and 70 each coordinate dimethylallyl diphosphate. Positions 36 and 70 each coordinate isopentenyl diphosphate. Cys92 lines the [4Fe-4S] cluster pocket. A (2E)-4-hydroxy-3-methylbut-2-enyl diphosphate-binding site is contributed by His120. A dimethylallyl diphosphate-binding site is contributed by His120. Position 120 (His120) interacts with isopentenyl diphosphate. Glu122 serves as the catalytic Proton donor. Thr158 provides a ligand contact to (2E)-4-hydroxy-3-methylbut-2-enyl diphosphate. Position 186 (Cys186) interacts with [4Fe-4S] cluster. Ser214, Asn216, and Ser258 together coordinate (2E)-4-hydroxy-3-methylbut-2-enyl diphosphate. The dimethylallyl diphosphate site is built by Ser214, Asn216, and Ser258. Isopentenyl diphosphate-binding residues include Ser214, Asn216, and Ser258.

This sequence belongs to the IspH family. Requires [4Fe-4S] cluster as cofactor.

The catalysed reaction is isopentenyl diphosphate + 2 oxidized [2Fe-2S]-[ferredoxin] + H2O = (2E)-4-hydroxy-3-methylbut-2-enyl diphosphate + 2 reduced [2Fe-2S]-[ferredoxin] + 2 H(+). It catalyses the reaction dimethylallyl diphosphate + 2 oxidized [2Fe-2S]-[ferredoxin] + H2O = (2E)-4-hydroxy-3-methylbut-2-enyl diphosphate + 2 reduced [2Fe-2S]-[ferredoxin] + 2 H(+). Its pathway is isoprenoid biosynthesis; dimethylallyl diphosphate biosynthesis; dimethylallyl diphosphate from (2E)-4-hydroxy-3-methylbutenyl diphosphate: step 1/1. The protein operates within isoprenoid biosynthesis; isopentenyl diphosphate biosynthesis via DXP pathway; isopentenyl diphosphate from 1-deoxy-D-xylulose 5-phosphate: step 6/6. Catalyzes the conversion of 1-hydroxy-2-methyl-2-(E)-butenyl 4-diphosphate (HMBPP) into a mixture of isopentenyl diphosphate (IPP) and dimethylallyl diphosphate (DMAPP). Acts in the terminal step of the DOXP/MEP pathway for isoprenoid precursor biosynthesis. The sequence is that of 4-hydroxy-3-methylbut-2-enyl diphosphate reductase from Campylobacter jejuni subsp. jejuni serotype O:6 (strain 81116 / NCTC 11828).